The primary structure comprises 1013 residues: Ephrin type-B receptor 6 (1013 aa).

The signal sequence occupies residues 1 to 31 (MASENTAGSGSRVAGMVYSLWLLVLGPSVLA). Residues 32 to 590 (LEEVLLDTTG…LPEKLSLVIG (559 aa)) lie on the Extracellular side of the membrane. In terms of domain architecture, Eph LBD spans 33–231 (EEVLLDTTGE…FSYTCPSVLR (199 aa)). 2 Fibronectin type-III domains span residues 363–478 (PPSA…TSHE) and 479–574 (VPSA…TLPQ). An N-linked (GlcNAc...) asparagine glycan is attached at Asn-472. A helical membrane pass occupies residues 591–611 (SILGALAFLLLAAITVLAVIF). Residues 612–1013 (QRKRRGTGYT…HLRQPGSVEV (402 aa)) lie on the Cytoplasmic side of the membrane. Residues 662–911 (IKIEEVIGAG…QLVAAFDKMI (250 aa)) enclose the Protein kinase domain. 668–676 (IGAGSFGEV) provides a ligand contact to ATP. The 65-residue stretch at 940–1004 (PCLDSPQAWL…LHNIQLLQQH (65 aa)) folds into the SAM domain. Residues 1011–1013 (VEV) carry the PDZ-binding motif.

This sequence belongs to the protein kinase superfamily. Tyr protein kinase family. Ephrin receptor subfamily. In terms of assembly, interacts with CBL and EPHB1. Interacts with FYN; this interaction takes place in a ligand-independent manner. Ligand-binding increases phosphorylation on tyrosine residues. Phosphorylation on tyrosine residues is mediated by transphosphorylation by the catalytically active EPHB1 in a ligand-independent manner. Tyrosine phosphorylation of the receptor may act as a switch on the functional transition from cell adhesion/attraction to de-adhesion/repulsion.

The protein localises to the membrane. Functionally, kinase-defective receptor for members of the ephrin-B family. Binds to ephrin-B1 and ephrin-B2. Modulates cell adhesion and migration by exerting both positive and negative effects upon stimulation with ephrin-B2. Inhibits JNK activation, T-cell receptor-induced IL-2 secretion and CD25 expression upon stimulation with ephrin-B2. This is Ephrin type-B receptor 6 (Ephb6) from Rattus norvegicus (Rat).